The chain runs to 1202 residues: DNA-directed RNA polymerase subunit beta (1202 aa).

Belongs to the RNA polymerase beta chain family. In terms of assembly, the RNAP catalytic core consists of 2 alpha, 1 beta, 1 beta' and 1 omega subunit. When a sigma factor is associated with the core the holoenzyme is formed, which can initiate transcription.

It carries out the reaction RNA(n) + a ribonucleoside 5'-triphosphate = RNA(n+1) + diphosphate. DNA-dependent RNA polymerase catalyzes the transcription of DNA into RNA using the four ribonucleoside triphosphates as substrates. The polypeptide is DNA-directed RNA polymerase subunit beta (Mycoplasmopsis synoviae (strain 53) (Mycoplasma synoviae)).